Here is a 211-residue protein sequence, read N- to C-terminus: Thiamine-phosphate synthase (211 aa).

4-amino-2-methyl-5-(diphosphooxymethyl)pyrimidine contacts are provided by residues 37–41 and Asn-69; that span reads QLRIK. The Mg(2+) site is built by Asp-70 and Asp-89. Ser-108 contributes to the 4-amino-2-methyl-5-(diphosphooxymethyl)pyrimidine binding site. A 2-[(2R,5Z)-2-carboxy-4-methylthiazol-5(2H)-ylidene]ethyl phosphate-binding site is contributed by 134–136; that stretch reads TQT. Lys-137 lines the 4-amino-2-methyl-5-(diphosphooxymethyl)pyrimidine pocket. 2-[(2R,5Z)-2-carboxy-4-methylthiazol-5(2H)-ylidene]ethyl phosphate contacts are provided by residues Gly-166 and 186 to 187; that span reads VS.

It belongs to the thiamine-phosphate synthase family. Mg(2+) is required as a cofactor.

It carries out the reaction 2-[(2R,5Z)-2-carboxy-4-methylthiazol-5(2H)-ylidene]ethyl phosphate + 4-amino-2-methyl-5-(diphosphooxymethyl)pyrimidine + 2 H(+) = thiamine phosphate + CO2 + diphosphate. The enzyme catalyses 2-(2-carboxy-4-methylthiazol-5-yl)ethyl phosphate + 4-amino-2-methyl-5-(diphosphooxymethyl)pyrimidine + 2 H(+) = thiamine phosphate + CO2 + diphosphate. It catalyses the reaction 4-methyl-5-(2-phosphooxyethyl)-thiazole + 4-amino-2-methyl-5-(diphosphooxymethyl)pyrimidine + H(+) = thiamine phosphate + diphosphate. It functions in the pathway cofactor biosynthesis; thiamine diphosphate biosynthesis; thiamine phosphate from 4-amino-2-methyl-5-diphosphomethylpyrimidine and 4-methyl-5-(2-phosphoethyl)-thiazole: step 1/1. Functionally, condenses 4-methyl-5-(beta-hydroxyethyl)thiazole monophosphate (THZ-P) and 2-methyl-4-amino-5-hydroxymethyl pyrimidine pyrophosphate (HMP-PP) to form thiamine monophosphate (TMP). In Salmonella typhimurium (strain LT2 / SGSC1412 / ATCC 700720), this protein is Thiamine-phosphate synthase.